Consider the following 456-residue polypeptide: Bifunctional protein GlmU (456 aa).

A pyrophosphorylase region spans residues 1–227 (MKLRVVILAA…AQEVEGANNR (227 aa)). UDP-N-acetyl-alpha-D-glucosamine contacts are provided by residues 8–11 (LAAG), Lys-22, Gln-73, 78–79 (GT), 100–102 (YGD), Gly-137, Glu-152, Asn-167, and Asn-225. A Mg(2+)-binding site is contributed by Asp-102. Mg(2+) is bound at residue Asn-225. The interval 228-248 (QQLASLERALQQRQAEELMTQ) is linker. Positions 249–456 (GVTLIDPARF…WQRPQSKKGT (208 aa)) are N-acetyltransferase. UDP-N-acetyl-alpha-D-glucosamine-binding residues include Arg-331 and Lys-349. Catalysis depends on His-361, which acts as the Proton acceptor. Positions 364 and 375 each coordinate UDP-N-acetyl-alpha-D-glucosamine. Acetyl-CoA is bound by residues Ala-378, 384–385 (NY), Ser-403, Ala-421, and Arg-438.

This sequence in the N-terminal section; belongs to the N-acetylglucosamine-1-phosphate uridyltransferase family. In the C-terminal section; belongs to the transferase hexapeptide repeat family. Homotrimer. The cofactor is Mg(2+).

It is found in the cytoplasm. It catalyses the reaction alpha-D-glucosamine 1-phosphate + acetyl-CoA = N-acetyl-alpha-D-glucosamine 1-phosphate + CoA + H(+). The enzyme catalyses N-acetyl-alpha-D-glucosamine 1-phosphate + UTP + H(+) = UDP-N-acetyl-alpha-D-glucosamine + diphosphate. It functions in the pathway nucleotide-sugar biosynthesis; UDP-N-acetyl-alpha-D-glucosamine biosynthesis; N-acetyl-alpha-D-glucosamine 1-phosphate from alpha-D-glucosamine 6-phosphate (route II): step 2/2. It participates in nucleotide-sugar biosynthesis; UDP-N-acetyl-alpha-D-glucosamine biosynthesis; UDP-N-acetyl-alpha-D-glucosamine from N-acetyl-alpha-D-glucosamine 1-phosphate: step 1/1. The protein operates within bacterial outer membrane biogenesis; LPS lipid A biosynthesis. Its function is as follows. Catalyzes the last two sequential reactions in the de novo biosynthetic pathway for UDP-N-acetylglucosamine (UDP-GlcNAc). The C-terminal domain catalyzes the transfer of acetyl group from acetyl coenzyme A to glucosamine-1-phosphate (GlcN-1-P) to produce N-acetylglucosamine-1-phosphate (GlcNAc-1-P), which is converted into UDP-GlcNAc by the transfer of uridine 5-monophosphate (from uridine 5-triphosphate), a reaction catalyzed by the N-terminal domain. In Idiomarina loihiensis (strain ATCC BAA-735 / DSM 15497 / L2-TR), this protein is Bifunctional protein GlmU.